The chain runs to 134 residues: Small ribosomal subunit protein uS17c (134 aa).

The N-terminal 37 residues, 1–37 (HHFFTGNGIGLNRFSNPISSPQTQTQTRSLPFPAIKA), are a transit peptide targeting the chloroplast. The interval 106–134 (FLAVPAPSRKSKKAGSSGELGIPLQSQQE) is disordered.

It belongs to the universal ribosomal protein uS17 family. In terms of assembly, part of the 30S ribosomal subunit.

It is found in the plastid. The protein resides in the chloroplast. In terms of biological role, one of the primary rRNA binding proteins, it binds specifically to the 5'-end of 16S ribosomal RNA. The sequence is that of Small ribosomal subunit protein uS17c (RPS17) from Pisum sativum (Garden pea).